The sequence spans 193 residues: Probable chorismate pyruvate-lyase (193 aa).

Residues Arg81, Leu119, and Glu177 each contribute to the substrate site.

The protein belongs to the UbiC family.

It is found in the cytoplasm. The enzyme catalyses chorismate = 4-hydroxybenzoate + pyruvate. It functions in the pathway cofactor biosynthesis; ubiquinone biosynthesis. In terms of biological role, removes the pyruvyl group from chorismate, with concomitant aromatization of the ring, to provide 4-hydroxybenzoate (4HB) for the ubiquinone pathway. This Idiomarina loihiensis (strain ATCC BAA-735 / DSM 15497 / L2-TR) protein is Probable chorismate pyruvate-lyase.